Consider the following 336-residue polypeptide: CMP-sialic acid transporter (336 aa).

Topologically, residues 1-9 (MAQARENVS) are cytoplasmic. A helical membrane pass occupies residues 10 to 30 (LFFKLYCLAVMTLVAAAYTVA). The Lumenal portion of the chain corresponds to 31-45 (LRYTRTTAKELYFST). A helical membrane pass occupies residues 46–64 (TAVCVTEVIKLLISVGLLA). Residue lysine 55 coordinates CMP-N-acetyl-beta-neuraminate. The Cytoplasmic portion of the chain corresponds to 65-87 (KETGSLGRFKASLSENVLGSPKE). Residues 88-108 (LMKLSVPSLVYAVQNNMAFLA) form a helical membrane-spanning segment. Residue 101–102 (QN) coordinates CMP-N-acetyl-beta-neuraminate. Residues 109–114 (LSNLDA) are Lumenal-facing. Residues 115 to 135 (AVYQVTYQLKIPCTALCTVLM) traverse the membrane as a helical segment. 117–124 (YQVTYQLK) contacts CMP-N-acetyl-beta-neuraminate. Residues 136–141 (LNRTLS) lie on the Cytoplasmic side of the membrane. A helical transmembrane segment spans residues 142–160 (KLQWVSVFMLCGGVILVQW). Topologically, residues 161 to 175 (KPAQATKVVVEQSPL) are lumenal. Residues 176 to 196 (LGFGAIAIAVLCSGFAGVYFE) traverse the membrane as a helical segment. Residue serine 188 participates in CMP-N-acetyl-beta-neuraminate binding. The Cytoplasmic segment spans residues 197 to 209 (KVLKSSDTSLWVR). CMP-N-acetyl-beta-neuraminate is bound at residue 210-214 (NIQMY). The chain crosses the membrane as a helical span at residues 210-228 (NIQMYLSGIVVTLVGTYLS). Topologically, residues 229–243 (DGAEIKEKGFFYGYT) are lumenal. A helical transmembrane segment spans residues 244-262 (YYVWFVIFLASVGGLYTSV). Residues 263–269 (VVKYTDN) are Cytoplasmic-facing. The helical transmembrane segment at 270-288 (IMKGFSAAAAIVLSTIASV) threads the bilayer. CMP-N-acetyl-beta-neuraminate is bound at residue lysine 272. The Lumenal segment spans residues 289 to 296 (MLFGLQIT). Residues 297 to 315 (LSFAMGALLVCISIYLYGL) traverse the membrane as a helical segment. Topologically, residues 316-336 (PRQDTTCIQQEATSKERVIGV) are cytoplasmic. The interval 316-336 (PRQDTTCIQQEATSKERVIGV) is disordered.

The protein belongs to the nucleotide-sugar transporter family. SLC35A subfamily. As to quaternary structure, monomer.

It is found in the golgi apparatus membrane. The catalysed reaction is CMP-N-acetyl-beta-neuraminate(in) + CMP(out) = CMP-N-acetyl-beta-neuraminate(out) + CMP(in). The enzyme catalyses CMP-N-acetyl-beta-neuraminate(in) + AMP(out) = CMP-N-acetyl-beta-neuraminate(out) + AMP(in). It catalyses the reaction CDP-L-ribitol(in) + CDP(out) = CDP-L-ribitol(out) + CDP(in). It carries out the reaction UMP(out) + CMP-N-acetyl-beta-neuraminate(in) = UMP(in) + CMP-N-acetyl-beta-neuraminate(out). Its function is as follows. Transports CMP-sialic acid from the cytosol into the Golgi apparatus, functioning as an antiporter that exchanges CMP-sialic acid for CMP. Binds both CMP-sialic acid and free CMP, but has higher affinity for free CMP. Also able to exchange CMP-sialic acid for AMP and UMP. Also mediates the transport of CDP-ribitol. The protein is CMP-sialic acid transporter (SLC35A1) of Cricetulus griseus (Chinese hamster).